A 432-amino-acid chain; its full sequence is Sensor histidine kinase YrkQ (432 aa).

Over 1 to 12 (MAHLKFTLTKKL) the chain is Cytoplasmic. A helical membrane pass occupies residues 13-33 (ALLIMVAAIVSGVIFLTLQKI). Over 34 to 145 (TDDLIEGYLS…GFYSSRYYDL (112 aa)) the chain is Extracellular. The chain crosses the membrane as a helical span at residues 146–166 (AFALDLLGATLIFLIIVLFGI). One can recognise an HAMP domain in the interval 167-219 (RQSLRYLKTIHQEIHILEGGELDYEMTIKGHDELAMIAKSIEDLRKAFLDKLK). At 167–432 (RQSLRYLKTI…IVLRFWNTKM (266 aa)) the chain is on the cytoplasmic side. The Histidine kinase domain maps to 234-432 (EMSHDMRTPL…IVLRFWNTKM (199 aa)). Histidine 237 is subject to Phosphohistidine; by autocatalysis.

It localises to the cell membrane. The catalysed reaction is ATP + protein L-histidine = ADP + protein N-phospho-L-histidine.. Functionally, member of the two-component regulatory system YrkQ/YrkP. Probably activates YrkP by phosphorylation. This chain is Sensor histidine kinase YrkQ (yrkQ), found in Bacillus subtilis (strain 168).